A 255-amino-acid polypeptide reads, in one-letter code: MLPTYERLNDPKNVFFRMPFARLALAALSLPLGGFFFCVVWSLLFDFVRSTYTHCDVVNYLPSVSAAIGNYEPQKTIWRLAIFLHLPLRLAVAKIYLEYYKEHIRRSRRLLGILACFLNVVEDLALFCLSFWTSADSYETHRNAFVVFIACSECYMLMSYLLNRNARKVVLLPHEEKSLRYKRNLFLVNVLAFGLAGYCFVRHNARCEAGVYTFFALFEYIVVLTNMGFHMTSYWDFYALNVVCDAKHGLYLTQF.

A run of 6 helical transmembrane segments spans residues 25 to 45, 80 to 100, 111 to 131, 143 to 163, 185 to 205, and 209 to 229; these read LAALSLPLGGFFFCVVWSLLF, LAIFLHLPLRLAVAKIYLEYY, LGILACFLNVVEDLALFCLSF, NAFVVFIACSECYMLMSYLLN, LFLVNVLAFGLAGYCFVRHNA, and AGVYTFFALFEYIVVLTNMGF.

It belongs to the PGAP2 family.

Its subcellular location is the golgi apparatus membrane. The protein localises to the endoplasmic reticulum membrane. Its function is as follows. Involved in the lipid remodeling steps of GPI-anchor maturation. Required for stable expression of GPI-anchored proteins at the cell surface. This Drosophila pseudoobscura pseudoobscura (Fruit fly) protein is Post-GPI attachment to proteins factor 2.